The following is a 1756-amino-acid chain: RANBP2-like and GRIP domain-containing protein 2 (1756 aa).

Phosphoserine is present on serine 21. TPR repeat units lie at residues 59 to 92, 583 to 616, and 647 to 680; these read PRAH…NPPQ, QKMG…LKII, and EDAH…VSYW. The segment at 759 to 804 is disordered; it reads GPLYKNGSLRNADSEIKHSTPSPTKYSLSPSKSYKYSPKTPPRWAE. Over residues 777 to 796 the composition is skewed to low complexity; the sequence is STPSPTKYSLSPSKSYKYSP. Residues 1029-1165 form the RanBD1 1 domain; the sequence is HFEPVVQMPE…FEECQRLLLD (137 aa). Disordered stretches follow at residues 1206-1241 and 1299-1324; these read TKVT…TLEW and AKLN…ERDG. Polar residues predominate over residues 1228-1237; it reads IKPNPENTGP. Over residues 1310 to 1322 the composition is skewed to acidic residues; sequence TDEESDVTQEEER. Positions 1326 to 1462 constitute a RanBD1 2 domain; that stretch reads YFEPVVPLPD…FDEAKTAQEK (137 aa). Polar residues predominate over residues 1573-1586; sequence NDSETSSVAQSGSE. The segment at 1573-1614 is disordered; sequence NDSETSSVAQSGSESKVEPKKCELSKNSDIEQSSDSKVKNLS. The span at 1587-1610 shows a compositional bias: basic and acidic residues; it reads SKVEPKKCELSKNSDIEQSSDSKV. The GRIP domain maps to 1693-1743; sequence QEESAANVEHLKNVLLQFIFLKPGSERESLLPVINTMLQLSPEEKGKLAAV.

This chain is RANBP2-like and GRIP domain-containing protein 2 (RGPD2), found in Homo sapiens (Human).